Consider the following 496-residue polypeptide: Glycylpeptide N-tetradecanoyltransferase 1 (496 aa).

Residues 1–81 (MADESETAVK…DSTQDQPVKM (81 aa)) are disordered. 2 positions are modified to phosphoserine: Ser-31 and Ser-47. Positions 55 to 66 (KKKKKKQKKKKE) are enriched in basic residues. Ser-83 is modified (phosphoserine). Residues Gln-118, Phe-119, Trp-120, Phe-247, Leu-248, Cys-249, Val-250, Ser-256, Arg-258, Val-259, and Ala-260 each contribute to the tetradecanoyl-CoA site.

Belongs to the NMT family.

Its subcellular location is the cytoplasm. It is found in the cytosol. It localises to the membrane. The catalysed reaction is N-terminal glycyl-[protein] + tetradecanoyl-CoA = N-tetradecanoylglycyl-[protein] + CoA + H(+). It carries out the reaction N-terminal glycyl-L-lysyl-[protein] + tetradecanoyl-CoA = N-terminal glycyl-(N(6)-tetradecanoyl)-L-lysyl-[protein] + CoA + H(+). Its function is as follows. Adds a myristoyl group to the N-terminal glycine residue of certain cellular and viral proteins. Also able to mediate N-terminal lysine myristoylation of proteins: catalyzes myristoylation of ARF6 on both 'Gly-2' and 'Lys-3'. Lysine myristoylation is required to maintain ARF6 on membranes during the GTPase cycle. The sequence is that of Glycylpeptide N-tetradecanoyltransferase 1 (Nmt1) from Rattus norvegicus (Rat).